We begin with the raw amino-acid sequence, 280 residues long: Undecaprenyl-diphosphatase (280 aa).

8 consecutive transmembrane segments (helical) span residues 19–39, 44–64, 89–109, 125–145, 156–176, 197–217, 226–246, and 259–279; these read FLPV…PFSG, FDDL…LFLY, FYFL…GFIA, ILAS…WFFQ, VGFR…IPGV, AEFS…YKLI, VTIP…TLVI, and GVFG…TKFI.

It belongs to the UppP family.

It localises to the cell inner membrane. The catalysed reaction is di-trans,octa-cis-undecaprenyl diphosphate + H2O = di-trans,octa-cis-undecaprenyl phosphate + phosphate + H(+). Catalyzes the dephosphorylation of undecaprenyl diphosphate (UPP). Confers resistance to bacitracin. This Leptospira borgpetersenii serovar Hardjo-bovis (strain L550) protein is Undecaprenyl-diphosphatase.